Reading from the N-terminus, the 359-residue chain is Nicotinate-nucleotide--dimethylbenzimidazole phosphoribosyltransferase (359 aa).

The active-site Proton acceptor is glutamate 318.

This sequence belongs to the CobT family. In terms of assembly, homodimer.

The catalysed reaction is 5,6-dimethylbenzimidazole + nicotinate beta-D-ribonucleotide = alpha-ribazole 5'-phosphate + nicotinate + H(+). Its pathway is nucleoside biosynthesis; alpha-ribazole biosynthesis; alpha-ribazole from 5,6-dimethylbenzimidazole: step 1/2. In terms of biological role, catalyzes the synthesis of alpha-ribazole-5'-phosphate from nicotinate mononucleotide (NAMN) and 5,6-dimethylbenzimidazole (DMB). The sequence is that of Nicotinate-nucleotide--dimethylbenzimidazole phosphoribosyltransferase from Escherichia coli O127:H6 (strain E2348/69 / EPEC).